Here is a 276-residue protein sequence, read N- to C-terminus: Syntaxin-12 (276 aa).

S2 carries the post-translational modification N-acetylserine. At 2–248 (SYGPLDMYRN…RAAYYQKKSR (247 aa)) the chain is on the cytoplasmic side. A coiled-coil region spans residues 33–131 (IQRISQATAQ…RRVSEKEKES (99 aa)). Phosphoserine is present on residues S139, S142, S218, and S225. In terms of domain architecture, t-SNARE coiled-coil homology spans 178 to 240 (LELIKERETA…ERATEQLQRA (63 aa)). Residues 249 to 269 (KKMCILVLVLSVIILILGLII) form a helical; Anchor for type IV membrane protein membrane-spanning segment. The Vesicular segment spans residues 270 to 276 (WLVYKTK).

The protein belongs to the syntaxin family. In terms of assembly, interacts with NAPA and SNAP23. Identified in a complex containing STX6, STX12, VAMP4 and VTI1A. Associates with the BLOC-1 complex. Interacts with BLOC1S6. Interacts with GRIPAP1. Forms a complex with GRIP1, GRIA2 and NSG1; controls the intracellular fate of AMPAR and the endosomal sorting of the GRIA2 subunit toward recycling and membrane targeting. Interacts with NSG1. Interacts with TPC1. Interacts (via N-terminus) with VPS13B.

It localises to the endosome membrane. The protein resides in the golgi apparatus membrane. Its subcellular location is the endomembrane system. It is found in the early endosome membrane. The protein localises to the recycling endosome membrane. Functionally, SNARE promoting fusion of transport vesicles with target membranes. Together with SNARE STX6, promotes movement of vesicles from endosomes to the cell membrane, and may therefore function in the endocytic recycling pathway. Through complex formation with GRIP1, GRIA2 and NSG1 controls the intracellular fate of AMPAR and the endosomal sorting of the GRIA2 subunit toward recycling and membrane targeting. In Homo sapiens (Human), this protein is Syntaxin-12 (STX12).